Here is a 336-residue protein sequence, read N- to C-terminus: Probable tRNA pseudouridine synthase B (336 aa).

Catalysis depends on aspartate 81, which acts as the Nucleophile. The PUA domain occupies 248–323 (LKKVVVKDSA…VAVDVERVYM (76 aa)).

The protein belongs to the pseudouridine synthase TruB family. Type 2 subfamily.

The enzyme catalyses uridine(55) in tRNA = pseudouridine(55) in tRNA. Functionally, could be responsible for synthesis of pseudouridine from uracil-55 in the psi GC loop of transfer RNAs. This is Probable tRNA pseudouridine synthase B from Methanocaldococcus jannaschii (strain ATCC 43067 / DSM 2661 / JAL-1 / JCM 10045 / NBRC 100440) (Methanococcus jannaschii).